A 142-amino-acid polypeptide reads, in one-letter code: Large ribosomal subunit protein uL13 (142 aa).

It belongs to the universal ribosomal protein uL13 family. Part of the 50S ribosomal subunit.

Its function is as follows. This protein is one of the early assembly proteins of the 50S ribosomal subunit, although it is not seen to bind rRNA by itself. It is important during the early stages of 50S assembly. The protein is Large ribosomal subunit protein uL13 of Pseudoalteromonas atlantica (strain T6c / ATCC BAA-1087).